Here is a 500-residue protein sequence, read N- to C-terminus: L-arabinose isomerase (500 aa).

Positions 306, 333, 350, and 450 each coordinate Mn(2+).

This sequence belongs to the arabinose isomerase family. As to quaternary structure, homohexamer. It depends on Mn(2+) as a cofactor.

The catalysed reaction is beta-L-arabinopyranose = L-ribulose. Its pathway is carbohydrate degradation; L-arabinose degradation via L-ribulose; D-xylulose 5-phosphate from L-arabinose (bacterial route): step 1/3. Functionally, catalyzes the conversion of L-arabinose to L-ribulose. In Yersinia pseudotuberculosis serotype I (strain IP32953), this protein is L-arabinose isomerase.